The sequence spans 329 residues: Phosphate import ATP-binding protein PstB (329 aa).

The 243-residue stretch at 83-325 folds into the ABC transporter domain; it reads FEIENLNFWY…PKQKETNRYI (243 aa). 116 to 123 contacts ATP; the sequence is GKSGCGKS.

Belongs to the ABC transporter superfamily. Phosphate importer (TC 3.A.1.7) family. In terms of assembly, the complex is composed of two ATP-binding proteins (PstB), two transmembrane proteins (PstC and PstA) and a solute-binding protein (PstS).

The protein resides in the cell membrane. The enzyme catalyses phosphate(out) + ATP + H2O = ADP + 2 phosphate(in) + H(+). In terms of biological role, part of the ABC transporter complex PstSACB involved in phosphate import. Responsible for energy coupling to the transport system. This chain is Phosphate import ATP-binding protein PstB, found in Mycoplasma pneumoniae (strain ATCC 29342 / M129 / Subtype 1) (Mycoplasmoides pneumoniae).